The following is a 407-amino-acid chain: RNA-binding motif, single-stranded-interacting protein 2 (407 aa).

M1 bears the N-acetylmethionine mark. The segment at 29–54 (QQMAPPSPSNSTPNSSSGSNGNDQLS) is disordered. Residues 37-50 (SNSTPNSSSGSNGN) are compositionally biased toward low complexity. RRM domains are found at residues 56–129 (TNLY…MAKQ) and 135–220 (TNLY…FADG). Residue S106 is modified to Phosphoserine. T269 carries the phosphothreonine modification. Phosphoserine is present on residues S280 and S285.

The protein resides in the nucleus. The polypeptide is RNA-binding motif, single-stranded-interacting protein 2 (RBMS2) (Homo sapiens (Human)).